The primary structure comprises 375 residues: o-succinylbenzoate synthase (375 aa).

The active-site Proton donor is the K166. 3 residues coordinate Mg(2+): D191, E216, and D241. The Proton acceptor role is filled by K265.

Belongs to the mandelate racemase/muconate lactonizing enzyme family. MenC type 2 subfamily. In terms of assembly, homotetramer. It depends on a divalent metal cation as a cofactor.

It catalyses the reaction (1R,6R)-6-hydroxy-2-succinyl-cyclohexa-2,4-diene-1-carboxylate = 2-succinylbenzoate + H2O. The enzyme catalyses N-acetyl-D-methionine = N-acetyl-L-methionine. The protein operates within quinol/quinone metabolism; 1,4-dihydroxy-2-naphthoate biosynthesis; 1,4-dihydroxy-2-naphthoate from chorismate: step 4/7. It functions in the pathway quinol/quinone metabolism; menaquinone biosynthesis. In terms of biological role, converts 2-succinyl-6-hydroxy-2,4-cyclohexadiene-1-carboxylate (SHCHC) to 2-succinylbenzoate (OSB). Also acts as a N-succinylamino acid racemase (NSAR) that catalyzes the racemization of N-succinyl-D/L-phenylalanine. Can catalyze the racemization of a broad range of N-acylamino acids, including N-acetyl-D-methionine, N-formyl-D/L-methionine, N-formyl-D/L-norleucine, N-formyl-D/L-aminobutyric acid, N-formyl-D/L-norvaline, N-formyl-D/L-homophenylalanine, N-carbamoyl-D-methionine and N-carbamoyl-D-norleucine. May be a bifunctional enzyme involved in menaquinone biosynthesis and in an irreversible pathway for the conversion of D- to L-amino acids, thereby facilitating the survival and/or growth of the organism. The chain is o-succinylbenzoate synthase from Geobacillus stearothermophilus (Bacillus stearothermophilus).